The primary structure comprises 70 residues: Large ribosomal subunit protein bL31 (70 aa).

The Zn(2+) site is built by C16, C18, C38, and C41.

This sequence belongs to the bacterial ribosomal protein bL31 family. Type A subfamily. As to quaternary structure, part of the 50S ribosomal subunit. Zn(2+) is required as a cofactor.

In terms of biological role, binds the 23S rRNA. This Saccharopolyspora erythraea (strain ATCC 11635 / DSM 40517 / JCM 4748 / NBRC 13426 / NCIMB 8594 / NRRL 2338) protein is Large ribosomal subunit protein bL31.